We begin with the raw amino-acid sequence, 239 residues long: uncharacterized protein (239 aa).

An HTH cro/C1-type domain is found at 13–66; that stretch reads IEYLVDKLNGPSEFARKTGVTLSTITRWRKGEADPSRSNLVKIAEVTGVSIEWL. A DNA-binding region (H-T-H motif) is located at residues 24 to 43; it reads SEFARKTGVTLSTITRWRKG.

This is an uncharacterized protein from Haemophilus influenzae (strain ATCC 51907 / DSM 11121 / KW20 / Rd).